A 170-amino-acid polypeptide reads, in one-letter code: MGIPVVVPVAAAYSCSSSLAAPPRAAAAAARAPSRAHVAAAGMSSRASSFVGGSGGDLAAVAASVAARPRRAGSGGGGALGCKCLFGLGVPELAVIAGVAALVFGPKQLPEIGRSIGKTVKSFQQAAKEFETELKKEPGEGGDQPPPATPTAVSGGEEKGLEASSSKESA.

Residues 1-61 (MGIPVVVPVA…GGSGGDLAAV (61 aa)) constitute a chloroplast transit peptide. The Lumenal segment spans residues 62 to 84 (AASVAARPRRAGSGGGGALGCKC). The chain crosses the membrane as a helical span at residues 85–105 (LFGLGVPELAVIAGVAALVFG). At 106 to 170 (PKQLPEIGRS…LEASSSKESA (65 aa)) the chain is on the stromal side. Positions 130–139 (FETELKKEPG) are enriched in basic and acidic residues. The disordered stretch occupies residues 130 to 170 (FETELKKEPGEGGDQPPPATPTAVSGGEEKGLEASSSKESA).

Belongs to the TatA/E family. As to quaternary structure, in thylakoid membranes, TATC and TATB form a large receptor complex, containing about eight TATC-TATB pairs, which binds the precursor protein. Twin arginine signal peptide promotes pH-triggered docking of TATA oligomers to TATC-TATB receptor complex, inducing a conformational switch of TATA that results in activation of the translocase. TATA dissociates from TATC-TATB upon completion of translocation.

Its subcellular location is the plastid. It is found in the chloroplast thylakoid membrane. In terms of biological role, part of the twin-arginine translocation (Tat) system that transports large folded proteins containing a characteristic twin-arginine motif in their signal peptide across the thylakoid membrane. Involved in delta pH-dependent protein transport required for chloroplast development, especially thylakoid membrane formation. TATC and TATB mediate precursor recognition, whereas TATA facilitates translocation. The chain is Sec-independent protein translocase protein TATA, chloroplastic from Zea mays (Maize).